Reading from the N-terminus, the 201-residue chain is CASP-like protein 2A1 (201 aa).

The tract at residues 1-27 (MEKRDKGSSPMATMMGSRDENEDVENT) is disordered. Over 1–30 (MEKRDKGSSPMATMMGSRDENEDVENTTRT) the chain is Cytoplasmic. The helical transmembrane segment at 31–51 (AETMLRLVPMALCVSALVVML) threads the bilayer. The Extracellular segment spans residues 52–72 (KNTQTNDYGSLSYSDLGAFRY). A helical membrane pass occupies residues 73–93 (LVHVNGICAGYSLLSAVIVAM). Topologically, residues 94–101 (PRASTMPR) are cytoplasmic. A helical membrane pass occupies residues 102–122 (AWAFFLLDQVLTYVILAAGTV). Residues 123 to 152 (STEVLYLASKGDTTITWSEACVSFGGFCHK) lie on the Extracellular side of the membrane. A helical membrane pass occupies residues 153 to 173 (ALISIVITFVVVICYAALSLL). Topologically, residues 174–201 (SSYKLFSKYDSPVLTYPGKGIEIATFHG) are cytoplasmic.

Belongs to the Casparian strip membrane proteins (CASP) family. Homodimer and heterodimers.

Its subcellular location is the cell membrane. The polypeptide is CASP-like protein 2A1 (Populus trichocarpa (Western balsam poplar)).